The following is a 415-amino-acid chain: Serine--tRNA ligase (415 aa).

231-233 (TAE) serves as a coordination point for L-serine. Residue 262–264 (RSE) participates in ATP binding. An L-serine-binding site is contributed by Glu-285. 349-352 (EISS) contributes to the ATP binding site. Ser-383 lines the L-serine pocket.

Belongs to the class-II aminoacyl-tRNA synthetase family. Type-1 seryl-tRNA synthetase subfamily. As to quaternary structure, homodimer. The tRNA molecule binds across the dimer.

It localises to the cytoplasm. It carries out the reaction tRNA(Ser) + L-serine + ATP = L-seryl-tRNA(Ser) + AMP + diphosphate + H(+). The enzyme catalyses tRNA(Sec) + L-serine + ATP = L-seryl-tRNA(Sec) + AMP + diphosphate + H(+). Its pathway is aminoacyl-tRNA biosynthesis; selenocysteinyl-tRNA(Sec) biosynthesis; L-seryl-tRNA(Sec) from L-serine and tRNA(Sec): step 1/1. Its function is as follows. Catalyzes the attachment of serine to tRNA(Ser). Is also able to aminoacylate tRNA(Sec) with serine, to form the misacylated tRNA L-seryl-tRNA(Sec), which will be further converted into selenocysteinyl-tRNA(Sec). This Helicobacter pylori (strain P12) protein is Serine--tRNA ligase.